The following is a 215-amino-acid chain: Nascent polypeptide-associated complex subunit alpha (215 aa).

The tract at residues 1–81 (MPGEATETVP…SEKKARKAMS (81 aa)) is disordered. A compositionally biased stretch (polar residues) spans 9–21 (VPVTEQEMQQPQV). The span at 29–42 (SDSDDSVPELEEQD) shows a compositional bias: acidic residues. Positions 43–57 (SAQTQTQQAQLAAAA) are enriched in low complexity. One can recognise an NAC-A/B domain in the interval 70–135 (SRSEKKARKA…AKIEDLSQQA (66 aa)). In terms of domain architecture, UBA spans 176 to 213 (VEVKDIELVMSQANVSRAKAVRALKNNNNDIVNAIMEL).

The protein belongs to the NAC-alpha family.

Functionally, may promote appropriate targeting of ribosome-nascent polypeptide complexes. The chain is Nascent polypeptide-associated complex subunit alpha (naca) from Oreochromis niloticus (Nile tilapia).